Here is a 244-residue protein sequence, read N- to C-terminus: MKVKTSLSTLILILFLTGCKVDLYTGISQKEGNEMLALLRQEGLSADKEPDKDGKIKLLVEESDVAQAIDILKRKGYPHESFSTLQDVFPKDGLISSPIEELARLNYAKAQEISRTLSEIDGVLVARVHVVLPEEQNNKGKKGVAASASVFIKHAADIQFDTYIPQIKQLVNNSIEGLAYDRISVILVPSVDVRQSSHLPRNTSILSIQVSEESKGHLIGLLSLLILLLPVTNLAQYFWLQRKK.

A signal peptide spans 1–18; that stretch reads MKVKTSLSTLILILFLTG. The N-palmitoyl cysteine moiety is linked to residue cysteine 19. Cysteine 19 carries S-diacylglycerol cysteine lipidation. The chain crosses the membrane as a helical span at residues 218-238; it reads LIGLLSLLILLLPVTNLAQYF.

Belongs to the YscJ lipoprotein family.

The protein localises to the cell outer membrane. Functionally, required for the export process of the Yop proteins. The protein is Yop proteins translocation lipoprotein J (yscJ) of Yersinia pestis.